Reading from the N-terminus, the 363-residue chain is Putative RAD2-like endonuclease 095R (363 aa).

Belongs to the XPG/RAD2 endonuclease family. The cofactor is Mg(2+).

It localises to the host nucleus. Functionally, probable endonuclease. The protein is Putative RAD2-like endonuclease 095R of Frog virus 3 (isolate Goorha) (FV-3).